The chain runs to 122 residues: Acyl carrier protein 1, mitochondrial (122 aa).

The transit peptide at 1-34 (MALRNAILRHLRVPVQTLGLNQSKIGFLGTIRSF) directs the protein to the mitochondrion. Residues 44-119 (EAVVDRVLDV…LAIEYVYNHP (76 aa)) form the Carrier domain. S79 is modified (O-(pantetheine 4'-phosphoryl)serine).

It belongs to the acyl carrier protein (ACP) family. In terms of assembly, complex I is composed of at least 49 different subunits. Post-translationally, 4'-phosphopantetheine is transferred from CoA to a specific serine of the apo-ACP-like protein.

The protein resides in the mitochondrion. Its pathway is lipid metabolism; fatty acid biosynthesis. In terms of biological role, carrier of the growing fatty acid chain in fatty acid biosynthesis. May be involved in the synthesis of short and medium chain fatty acids. Accessory and non-catalytic subunit of the mitochondrial membrane respiratory chain NADH dehydrogenase (Complex I), which functions in the transfer of electrons from NADH to the respiratory chain. In Arabidopsis thaliana (Mouse-ear cress), this protein is Acyl carrier protein 1, mitochondrial (MTACP1).